We begin with the raw amino-acid sequence, 227 residues long: UPF0173 metal-dependent hydrolase YtkL (227 aa).

The protein belongs to the UPF0173 family.

The polypeptide is UPF0173 metal-dependent hydrolase YtkL (ytkL) (Bacillus subtilis (strain 168)).